Reading from the N-terminus, the 277-residue chain is Large ribosomal subunit protein uL2 (277 aa).

The segment at 223–277 (VVMNPIDHPHGGGEGRTSGGRHPVTPWGKPTKGKKTRSNKSTNKFILISRHKRKK) is disordered.

Belongs to the universal ribosomal protein uL2 family. Part of the 50S ribosomal subunit. Forms a bridge to the 30S subunit in the 70S ribosome.

Functionally, one of the primary rRNA binding proteins. Required for association of the 30S and 50S subunits to form the 70S ribosome, for tRNA binding and peptide bond formation. It has been suggested to have peptidyltransferase activity; this is somewhat controversial. Makes several contacts with the 16S rRNA in the 70S ribosome. This Nitrobacter hamburgensis (strain DSM 10229 / NCIMB 13809 / X14) protein is Large ribosomal subunit protein uL2.